The following is an 822-amino-acid chain: Protein smoothened (822 aa).

The N-terminal stretch at 1-28 (MSSKRPCSIVGSFWMLWIWTATSMVARA) is a signal peptide. Topologically, residues 29–212 (VILHPNETIF…EDEHSDMHSY (184 aa)) are extracellular. Residue Asn34 is glycosylated (N-linked (GlcNAc...) asparagine). Intrachain disulfides connect Cys42-Cys157, Cys48-Cys112, Cys56-Cys105, Cys96-Cys132, and Cys125-Cys147. One can recognise an FZ domain in the interval 43 to 160 (KKSTTCEVLK…EQFPKGCQNE (118 aa)). Asp73 lines the cholesterol pocket. N-linked (GlcNAc...) asparagine glycosylation is present at Asn167. Disulfide bonds link Cys172–Cys192, Cys196–Cys274, and Cys293–Cys369. Residues 213 to 233 (IAVFGTITLLCTFFTLATFLA) form a helical membrane-spanning segment. The Cytoplasmic segment spans residues 234-241 (DWKNSNRY). A helical transmembrane segment spans residues 242 to 262 (PAVILFYVNACFFIGSIGWLA). At 263–293 (QFMDGARNEIVCKSDNTMRLGEPSSTETLSC) the chain is on the extracellular side. A helical membrane pass occupies residues 294 to 314 (VIIFVIVYYSLMSGVIWFVML). Residues 315-335 (TYAWHTSFKALGTTHQPLSGK) are Cytoplasmic-facing. A helical transmembrane segment spans residues 336 to 356 (TSYFHLVTWSIPFILTVAILA). The Extracellular portion of the chain corresponds to 357–381 (NSQVDADSVSGICFVGYRYYEYRAG). A cholesterol-binding site is contributed by Tyr373. A helical membrane pass occupies residues 382–402 (FVLAPIGFVLVIGGYFLIRGV). At 403 to 430 (MTLFSIKSNHPGLLSEKAASKINETMLR) the chain is on the cytoplasmic side. Residues 431–451 (LGIFGFLAFGFVLITFGCHFY) traverse the membrane as a helical segment. At 452-503 (DFFNQAEWERSFREYVLCEANVTIAHQTNKPIPECAIKNRPSLLVGKINLFS) the chain is on the extracellular side. An intrachain disulfide couples Cys469 to Cys486. Asn472 is a glycosylation site (N-linked (GlcNAc...) asparagine). Residues 504-524 (MFGTGIAMSTWVWTKATILIW) traverse the membrane as a helical segment. The Cytoplasmic segment spans residues 525–822 (KRTWFRIIGR…AELLDADSDF (298 aa)). Positions 645-687 (MMKRKKKKKKRRKEVRPAGPAADEGNPAYHRREFGPSAVPRLP) are disordered. The segment covering 647-658 (KRKKKKKKRRKE) has biased composition (basic residues).

This sequence belongs to the G-protein coupled receptor Fz/Smo family. Monomer.

It localises to the cell membrane. The protein localises to the cell projection. Its subcellular location is the cilium. Functionally, g protein-coupled receptor which associates with the patched protein (ptch) to transduce Hedgehog protein signaling. Binding of sonic hedgehog (shh) to its receptor patched prevents inhibition of smoothened (smo) by patched. When active, smo binds to and sequesters protein kinase A catalytic subunit prkaca at the cell membrane, preventing prkaca-mediated phosphorylation of gli transcription factors which releases the gli proteins from prkaca-mediated inhibition and allows for transcriptional activation of Hedgehog signaling pathway target genes. Required for the development of primary and secondary motoneurons but not for the specification of midbrain dopaminergic neurons or development of the medial floor plate. Required for induction of lateral floor plate and posterior motoneurons, anterior neural plate patterning, dorsoventral forebrain patterning, dorsoventral retinal patterning, optic stalk development, and formation of the forebrain primary axonal scaffold. Required to regulate the formation of a subset of cerebellar neurons by limiting wnt1 expression which controls cerebellar expression of transcription factor olig2. Required for development of the pancreas. Required for muscle development. Required for the formation of a single continuous intestinal lumen from multiple discontinuous lumens, probably by regulating remodeling through rab11a-mediated trafficking to facilitate lumen fusion. Required for development of the adenohypophysis. Required for anteroposterior patterning of the otic vesicle. Required for development of the anterior craniofacial skeleton. Required for patterning of the caudal fin. Required during gastrulation and early somitogenesis stages to promote cardiomyocyte formation by regulating the specification of myocardial progenitors. Required for induction of arterial endothelial cell formation by repressing venous cell fate. This chain is Protein smoothened, found in Danio rerio (Zebrafish).